The following is a 102-amino-acid chain: Aspartyl/glutamyl-tRNA(Asn/Gln) amidotransferase subunit C (102 aa).

Belongs to the GatC family. As to quaternary structure, heterotrimer of A, B and C subunits.

It catalyses the reaction L-glutamyl-tRNA(Gln) + L-glutamine + ATP + H2O = L-glutaminyl-tRNA(Gln) + L-glutamate + ADP + phosphate + H(+). The catalysed reaction is L-aspartyl-tRNA(Asn) + L-glutamine + ATP + H2O = L-asparaginyl-tRNA(Asn) + L-glutamate + ADP + phosphate + 2 H(+). Its function is as follows. Allows the formation of correctly charged Asn-tRNA(Asn) or Gln-tRNA(Gln) through the transamidation of misacylated Asp-tRNA(Asn) or Glu-tRNA(Gln) in organisms which lack either or both of asparaginyl-tRNA or glutaminyl-tRNA synthetases. The reaction takes place in the presence of glutamine and ATP through an activated phospho-Asp-tRNA(Asn) or phospho-Glu-tRNA(Gln). This Lactobacillus acidophilus (strain ATCC 700396 / NCK56 / N2 / NCFM) protein is Aspartyl/glutamyl-tRNA(Asn/Gln) amidotransferase subunit C.